We begin with the raw amino-acid sequence, 27 residues long: Cupiennin-3a (27 aa).

A Glutamic acid 1-amide modification is found at E27.

In terms of tissue distribution, expressed by the venom gland.

Its subcellular location is the secreted. In Cupiennius salei (American wandering spider), this protein is Cupiennin-3a.